The sequence spans 701 residues: Eukaryotic peptide chain release factor GTP-binding subunit (701 aa).

Residues 1–25 are compositionally biased toward polar residues; it reads MSDDQQYNQDKLSQDFQNTSIGSGE. 3 disordered regions span residues 1 to 63, 91 to 124, and 164 to 259; these read MSDD…YQGG, NQGYQGYQNNNRGGYNNYNNRGGYNNYNNYNQQD, and KLAN…VIQE. The several sort of repeats stretch occupies residues 20–131; it reads SIGSGEQQQQ…QQDQQPVQNQ (112 aa). Residues 26–40 show a composition bias toward low complexity; it reads QQQQSYQQYQQQPQQ. Over residues 41 to 54 the composition is skewed to polar residues; it reads NNFNANSAPTFTPS. The tract at residues 132-271 is charged; the sequence is GMSLADFQKQ…DEVDEEVVKD (140 aa). Basic and acidic residues predominate over residues 170 to 224; sequence KAPETESKEATPAATEKEATPAATEKEATPAATEKEATPAATEKETTPAPAKKEA. Residues 228–252 show a composition bias toward polar residues; sequence SVKSESKPASKSTSKVATKESTPVT. The tr-type G domain maps to 276–501; that stretch reads KDHVSIIFMG…FLDNMKTMQR (226 aa). The G1 stretch occupies residues 285–292; that stretch reads GHVDAGKS. 285-292 provides a ligand contact to GTP; the sequence is GHVDAGKS. Residues 341–345 are G2; that stretch reads GKTIE. Threonine 359 is modified (phosphothreonine). The G3 stretch occupies residues 362 to 365; it reads DAPG. Residues 362-366 and 424-427 contribute to the GTP site; these read DAPGH and NKMD. The G4 stretch occupies residues 424–427; the sequence is NKMD. Residues 465-467 are G5; sequence SGY.

It belongs to the TRAFAC class translation factor GTPase superfamily. Classic translation factor GTPase family. ERF3 subfamily.

The protein localises to the cytoplasm. Involved in translation termination. Stimulates the activity of ERF1. Binds guanine nucleotides. This chain is Eukaryotic peptide chain release factor GTP-binding subunit (SUP35), found in Debaryomyces hansenii (strain ATCC 36239 / CBS 767 / BCRC 21394 / JCM 1990 / NBRC 0083 / IGC 2968) (Yeast).